Consider the following 159-residue polypeptide: Ribosome maturation factor RimP (159 aa).

This sequence belongs to the RimP family.

Its subcellular location is the cytoplasm. Functionally, required for maturation of 30S ribosomal subunits. The polypeptide is Ribosome maturation factor RimP (Geotalea uraniireducens (strain Rf4) (Geobacter uraniireducens)).